Reading from the N-terminus, the 579-residue chain is Moesin a (579 aa).

The region spanning 5–295 (ISVRVTTMDA…GNHELYMRRR (291 aa)) is the FERM domain. Residues 306 to 448 (KAQAKEEKNH…EDEALEWQTK (143 aa)) adopt a coiled-coil conformation. Disordered regions lie at residues 308–341 (QAKEEKNHKKMERALLEDERKKREQAEKEKEKIE), 376–418 (EQER…EHLA), and 464–519 (KNKV…KNER). Residues 376 to 400 (EQERKRAQEEAERLERERRLAEEAK) are compositionally biased toward basic and acidic residues. The segment covering 490-501 (AEASAELTSAAA) has biased composition (low complexity). Residues 502–519 (YKDRSEEERMTEAEKNER) are compositionally biased toward basic and acidic residues. Residues 517 to 551 (NERVQKHLLALTSELANARDETKKTQNDIIHAENV) are a coiled coil.

The protein localises to the cell membrane. The protein resides in the cell junction. Its function is as follows. Positively regulates endothelial adherens junction formation and stabilization. Is thereby required for intersegmental vessel luminal membrane formation and stabilization during tubulogenesis in the early stages of development, independent of blood flow dynamics. The polypeptide is Moesin a (Danio rerio (Zebrafish)).